We begin with the raw amino-acid sequence, 749 residues long: Phosphate-regulating neutral endopeptidase PHEX (749 aa).

Residues 1-20 are Cytoplasmic-facing; it reads MEAETGSSVETGKKANRGTR. The chain crosses the membrane as a helical; Signal-anchor for type II membrane protein span at residues 21-41; that stretch reads IALVVFVGGTLVLGTILFLVS. At 42–641 the chain is on the extracellular side; the sequence is QGLLSLQAKQ…LNVKGKRTLG (600 aa). The region spanning 53–749 is the Peptidase M13 domain; sequence YCLKPECIEA…NRGMDSCRLW (697 aa). An intrachain disulfide couples Cys-54 to Cys-59. Residues Asn-71, Asn-238, Asn-263, Asn-290, Asn-301, Asn-377, and Asn-484 are each glycosylated (N-linked (GlcNAc...) asparagine). 4 cysteine pairs are disulfide-bonded: Cys-77–Cys-733, Cys-85–Cys-693, Cys-142–Cys-406, and Cys-617–Cys-746. His-580 is a binding site for Zn(2+). Glu-581 is an active-site residue. 2 residues coordinate Zn(2+): His-584 and Glu-642. Asp-646 acts as the Proton donor in catalysis. N-linked (GlcNAc...) asparagine glycosylation is present at Asn-736.

It belongs to the peptidase M13 family. Interacts with MEPE; the interaction is zinc-dependent (via ASARM motif). Zn(2+) serves as cofactor. As to expression, specifically expressed in ovary. Expressed at low levels in kidney.

Its subcellular location is the cell membrane. Functionally, peptidase that cleaves SIBLING (small integrin-binding ligand, N-linked glycoprotein)-derived ASARM peptides, thus regulating their biological activity. Cleaves ASARM peptides between Ser and Glu or Asp residues. Regulates osteogenic cell differentiation and bone mineralization through the cleavage of the MEPE-derived ASARM peptide. Promotes dentin mineralization and renal phosphate reabsorption by cleaving DMP1- and MEPE-derived ASARM peptides. Inhibits the cleavage of MEPE by CTSB/cathepsin B thus preventing MEPE degradation. This chain is Phosphate-regulating neutral endopeptidase PHEX (PHEX), found in Homo sapiens (Human).